A 200-amino-acid chain; its full sequence is Urease accessory protein UreG (200 aa).

11–18 (GPVGSGKT) lines the GTP pocket.

This sequence belongs to the SIMIBI class G3E GTPase family. UreG subfamily. Homodimer. UreD, UreF and UreG form a complex that acts as a GTP-hydrolysis-dependent molecular chaperone, activating the urease apoprotein by helping to assemble the nickel containing metallocenter of UreC. The UreE protein probably delivers the nickel.

The protein resides in the cytoplasm. Facilitates the functional incorporation of the urease nickel metallocenter. This process requires GTP hydrolysis, probably effectuated by UreG. The chain is Urease accessory protein UreG from Thermosynechococcus vestitus (strain NIES-2133 / IAM M-273 / BP-1).